Here is a 337-residue protein sequence, read N- to C-terminus: MSVIETATVPLAQQQADALLNVKDLRVTFSTPDGDVTAVNDLNFSLRAGETLGIVGESGSGKSQTAFALMGLLAANGRIGGSATFNGREILNLPEHELNKLRAEQISMIFQDPMTSLNPYMRVGEQLMEVLMLHKNMSKAEAFEESVRMLDAVKMPEARKRMKMYPHEFSGGMRQRVMIAMALLCRPKLLIADEPTTALDVTVQAQIMTLLNELKREFNTAIIMITHDLVVVAGICDKVLVMYAGRTMEYGNARDVFYQPVHPYSIGLLNAVPRLDAEGETMLTIPGNPPNLLRLPKGCPFQPRCPHAMEICSSAPPLEEFTPGRLRACFKPVEELL.

Residues 20–269 (LNVKDLRVTF…PVHPYSIGLL (250 aa)) enclose the ABC transporter domain. 56 to 63 (GESGSGKS) contributes to the ATP binding site.

This sequence belongs to the ABC transporter superfamily. In terms of assembly, the complex is composed of two ATP-binding proteins (OppD and OppF), two transmembrane proteins (OppB and OppC) and a solute-binding protein (OppA or MppA).

The protein resides in the cell inner membrane. It catalyses the reaction a [peptide](out) + ATP + H2O = a [peptide](in) + ADP + phosphate + H(+). The catalysed reaction is L-alanyl-gamma-D-glutamyl-meso-2,6-diaminopimelate(out) + ATP + H2O = L-alanyl-gamma-D-glutamyl-meso-2,6-diaminopimelate(in) + ADP + phosphate + H(+). In terms of biological role, part of the ABC transporter complex OppABCDF involved in the uptake of oligopeptides and of the ABC transporter complex MppA-OppBCDF involved in the uptake of the cell wall murein tripeptide L-alanyl-gamma-D-glutamyl-meso-diaminopimelate. Probably responsible for energy coupling to the transport system. Plays an important nutritional role and is involved in the recycling of cell wall peptides. The chain is Oligopeptide transport ATP-binding protein OppD (oppD) from Escherichia coli (strain K12).